An 87-amino-acid chain; its full sequence is Neutrophil antibiotic peptide NP-3A (87 aa).

The first 19 residues, Met-1–Ala-19, serve as a signal peptide directing secretion. A propeptide spanning residues Glu-20–Thr-58 is cleaved from the precursor. 3 disulfide bridges follow: Cys-59/Cys-87, Cys-61/Cys-76, and Cys-66/Cys-86.

This sequence belongs to the alpha-defensin family. In terms of tissue distribution, highest expression in bone marrow and to a much lesser extent in small intestine.

It is found in the secreted. In terms of biological role, active in vitro against S.aureus, fungi, Gram-positive and Gram-negative bacteria and to a lesser extent against an enveloped virus. This is Neutrophil antibiotic peptide NP-3A from Rattus norvegicus (Rat).